The sequence spans 567 residues: Sensor histidine kinase MtrB (567 aa).

Basic residues predominate over residues 1–15 (MIFGSRRRIRGRRGR). The tract at residues 1-20 (MIFGSRRRIRGRRGRSGPMT) is disordered. The next 2 helical transmembrane spans lie at 42–62 (VVAL…FVLT) and 213–233 (GTMA…ALLV). The region spanning 235–287 (RQVVVPVRSASRIAERFAEGHLSERMPVRGEDDMARLAVSFNDMAESLSRQIA) is the HAMP domain. Residues 302–519 (DVSHELRTPL…CFRLTLPMVR (218 aa)) form the Histidine kinase domain. Histidine 305 carries the phosphohistidine; by autocatalysis modification. Residues 529 to 551 (PMKPIPQPVLQPVAQPNPQPMPP) show a composition bias toward pro residues. A disordered region spans residues 529–567 (PMKPIPQPVLQPVAQPNPQPMPPEYKERQRPREHAEWSG). Residues 552–567 (EYKERQRPREHAEWSG) show a composition bias toward basic and acidic residues.

As to quaternary structure, interacts with MrtA. Interacts with LpqB, probably extracytoplasmically via MtrB's sensor domain. Mg(2+) serves as cofactor. It depends on Ca(2+) as a cofactor. In terms of processing, the C-terminal domain (residues 234-567) autophosphorylates.

It is found in the cell membrane. The catalysed reaction is ATP + protein L-histidine = ADP + protein N-phospho-L-histidine.. With respect to regulation, ca(2+) ions inhibit the phosphotransfer from MtrB to MtrA. In terms of biological role, member of the two-component regulatory system MtrA/MtrB. Probably functions as a membrane-associated protein kinase that phosphorylates MtrA in response to environmental signals. Autophosphorylates and transfers phosphate to MtrA in vitro. Overexpression of MtrA alone decreases bacterial virulence in mouse infection; co-expression of MtrA and MtrB restores normal bacterial growth, suggesting that bacterial growth in macrophages requires an optimal ratio of MtrB to MtrA. Probably plays a role in cell division. In Mycobacterium tuberculosis (strain ATCC 25618 / H37Rv), this protein is Sensor histidine kinase MtrB (mtrB).